Here is a 744-residue protein sequence, read N- to C-terminus: C-type polyheme cytochrome OmcB (744 aa).

Positions 1–23 (MSRKVTKYSAVLAVSLFAAALAG) are cleaved as a signal peptide. A lipid anchor (N-palmitoyl cysteine) is attached at Cys-24. Cys-24 is lipidated: S-diacylglycerol cysteine. Heme c contacts are provided by Cys-48, Cys-51, His-52, Cys-81, Cys-84, His-85, Cys-107, Cys-110, His-111, Cys-141, Cys-144, His-145, Cys-185, Cys-188, His-189, Cys-225, Cys-228, His-229, Cys-303, Cys-306, His-307, Cys-382, Cys-385, His-386, Cys-430, Cys-433, His-434, Cys-480, Cys-483, His-484, Cys-555, Cys-558, His-559, Cys-587, Cys-590, and His-591.

Binds 12 heme c groups per subunit.

The protein resides in the cell outer membrane. Involved in anaerobic respiration with Fe(3+) as terminal electron acceptor. Acts as an electron-transport mediator in the dissimilatory reduction of Fe(3+). This Geobacter sulfurreducens (strain DL-1 / KN400) protein is C-type polyheme cytochrome OmcB (omcB).